We begin with the raw amino-acid sequence, 256 residues long: Lysosomal membrane ascorbate-dependent ferrireductase CYB561A3 (256 aa).

Topologically, residues 1 to 3 (MAS) are cytoplasmic. A helical transmembrane segment spans residues 4–24 (GWFYMSCMVLGSLGSMCILFT). The region spanning 12-219 (VLGSLGSMCI…FGLLVLYILL (208 aa)) is the Cytochrome b561 domain. Topologically, residues 25–40 (TYWMQYWRGGFAWDGT) are lumenal. Residues 41–61 (VLMFNWHPVLMVSGMVVLYGA) form a helical membrane-spanning segment. 2 residues coordinate heme b: histidine 47 and arginine 67. At 62 to 83 (ASLVYRLPASWVGPKLPWKVLH) the chain is on the cytoplasmic side. 2 residues coordinate L-ascorbate: lysine 76 and lysine 80. Heme b is bound at residue histidine 83. Residues 84-104 (AALHLLAFTVTVVGLTAVFGF) form a helical membrane-spanning segment. Over 105-119 (HNHSKITHLYSLHSW) the chain is Lumenal. Asparagine 106 is a glycosylation site (N-linked (GlcNAc...) asparagine). Residues 112 to 115 (HLYS) and histidine 117 contribute to the heme b site. Residues 120 to 140 (LGITTVALFACQWFLGFAVFL) traverse the membrane as a helical segment. Residues 141–154 (LPWASQWLRSLLKP) lie on the Cytoplasmic side of the membrane. Arginine 149 is an L-ascorbate binding site. The chain crosses the membrane as a helical span at residues 155 to 175 (VHVFFGACILSLSIASVISGI). Positions 156 and 177 each coordinate heme b. The Lumenal segment spans residues 176 to 202 (NEKLFFVLKNATRPYSSLPGEAVFANS). A helical transmembrane segment spans residues 203–223 (TGILVVSFGLLVLYILLASSW). Arginine 224 contributes to the heme b binding site. The Cytoplasmic segment spans residues 224-256 (RRPDPGALTDRQVWLLVSHYRWDKAKKACFAPC).

As to quaternary structure, homodimer. Heme b serves as cofactor. In terms of processing, N-glycosylated.

The protein resides in the late endosome membrane. It is found in the lysosome membrane. The catalysed reaction is Fe(3+)(out) + L-ascorbate(in) = monodehydro-L-ascorbate radical(in) + Fe(2+)(out) + H(+). In terms of biological role, transmembrane reductase that uses ascorbate as an electron donor in the cytoplasm and transfers electrons across membranes to reduce iron cations Fe(3+) into Fe(2+) in the lumen of the late endosome and lysosome. Reduced iron can then be extruded from the late endosome and lysosome to the cytoplasm by divalent metal-specific transporters. It is therefore most probably involved in endosomal and lysosomal cellular iron homeostasis. In Rattus norvegicus (Rat), this protein is Lysosomal membrane ascorbate-dependent ferrireductase CYB561A3.